Reading from the N-terminus, the 677-residue chain is DNA ligase (677 aa).

NAD(+)-binding positions include 38 to 42 (DSVYD), 87 to 88 (SL), and glutamate 119. Lysine 121 serves as the catalytic N6-AMP-lysine intermediate. NAD(+) contacts are provided by arginine 142, glutamate 179, lysine 296, and lysine 320. Positions 414, 417, 432, and 438 each coordinate Zn(2+). One can recognise a BRCT domain in the interval 595 to 677 (VVKSEIAGKT…LKLLKSKGVF (83 aa)).

The protein belongs to the NAD-dependent DNA ligase family. LigA subfamily. Requires Mg(2+) as cofactor. Mn(2+) is required as a cofactor.

It catalyses the reaction NAD(+) + (deoxyribonucleotide)n-3'-hydroxyl + 5'-phospho-(deoxyribonucleotide)m = (deoxyribonucleotide)n+m + AMP + beta-nicotinamide D-nucleotide.. DNA ligase that catalyzes the formation of phosphodiester linkages between 5'-phosphoryl and 3'-hydroxyl groups in double-stranded DNA using NAD as a coenzyme and as the energy source for the reaction. It is essential for DNA replication and repair of damaged DNA. The protein is DNA ligase of Coxiella burnetii (strain CbuG_Q212) (Coxiella burnetii (strain Q212)).